Consider the following 70-residue polypeptide: Turripeptide Ici9.2 (70 aa).

The first 20 residues, 1–20 (MKVYCLLLVLLVGLVSQAQG), serve as a signal peptide directing secretion. The Kazal-like domain occupies 21–70 (QLDKKCQTMCTMEYLPVCGSDGTTYPNKCTLTSTACVNQMDITVLHNGEC). 3 disulfide bridges follow: C26/C56, C30/C49, and C38/C70.

Belongs to the conopeptide P-like superfamily. In terms of tissue distribution, expressed by the venom duct.

Its subcellular location is the secreted. In terms of biological role, acts as a neurotoxin by inhibiting an ion channel. May also act as a serine protease inhibitor, since it possess the kazal serine protease inhibitor signature. This Iotyrris cingulifera (Sea snail) protein is Turripeptide Ici9.2.